Reading from the N-terminus, the 351-residue chain is Epoxyqueuosine reductase (351 aa).

The active-site Proton donor is aspartate 131. One can recognise a 4Fe-4S ferredoxin-type domain in the interval 177 to 205 (EDQPVDYGCGSCTRCVDFCPTKALLGDGR). [4Fe-4S] cluster is bound by residues cysteine 185, cysteine 188, cysteine 191, cysteine 195, cysteine 211, cysteine 237, cysteine 240, and cysteine 244.

It belongs to the QueG family. Monomer. Cob(II)alamin serves as cofactor. [4Fe-4S] cluster is required as a cofactor.

It is found in the cytoplasm. The catalysed reaction is epoxyqueuosine(34) in tRNA + AH2 = queuosine(34) in tRNA + A + H2O. It participates in tRNA modification; tRNA-queuosine biosynthesis. In terms of biological role, catalyzes the conversion of epoxyqueuosine (oQ) to queuosine (Q), which is a hypermodified base found in the wobble positions of tRNA(Asp), tRNA(Asn), tRNA(His) and tRNA(Tyr). The sequence is that of Epoxyqueuosine reductase from Lactococcus garvieae (strain Lg2) (Enterococcus seriolicida).